The primary structure comprises 835 residues: Translation initiation factor IF-2 (835 aa).

The interval 1 to 240 (MSDSDGKKTL…RKQERARQKA (240 aa)) is disordered. Over residues 50–59 (AGKGGAGGVA) the composition is skewed to gly residues. Basic and acidic residues predominate over residues 86–152 (KAREAEEAAQ…AEAAKKRAAA (67 aa)). The segment covering 153–169 (DKAAAAAPKSDAGVAPA) has biased composition (low complexity). The span at 184–205 (RKAEREREERGRGAKGRNDGGR) shows a compositional bias: basic and acidic residues. The region spanning 332–500 (PRPPVITIMG…AIALQAEILE (169 aa)) is the tr-type G domain. Positions 341-348 (GHVDHGKT) are G1. 341 to 348 (GHVDHGKT) contacts GTP. The tract at residues 366–370 (GITQH) is G2. Residues 388-391 (DTPG) are G3. GTP-binding positions include 388–392 (DTPGH) and 442–445 (NKID). Residues 442-445 (NKID) are G4. The tract at residues 478–480 (SAH) is G5.

It belongs to the TRAFAC class translation factor GTPase superfamily. Classic translation factor GTPase family. IF-2 subfamily.

It is found in the cytoplasm. In terms of biological role, one of the essential components for the initiation of protein synthesis. Protects formylmethionyl-tRNA from spontaneous hydrolysis and promotes its binding to the 30S ribosomal subunits. Also involved in the hydrolysis of GTP during the formation of the 70S ribosomal complex. The polypeptide is Translation initiation factor IF-2 (Ruegeria sp. (strain TM1040) (Silicibacter sp.)).